Reading from the N-terminus, the 184-residue chain is Protein GrpE (184 aa).

Basic and acidic residues predominate over residues 1–10; that stretch reads MSQETEKDLE. Positions 1–38 are disordered; sequence MSQETEKDLEQTQNEELVEEAQSDEKKDQEVDPVEAAQ.

It belongs to the GrpE family. In terms of assembly, homodimer.

The protein localises to the cytoplasm. In terms of biological role, participates actively in the response to hyperosmotic and heat shock by preventing the aggregation of stress-denatured proteins, in association with DnaK and GrpE. It is the nucleotide exchange factor for DnaK and may function as a thermosensor. Unfolded proteins bind initially to DnaJ; upon interaction with the DnaJ-bound protein, DnaK hydrolyzes its bound ATP, resulting in the formation of a stable complex. GrpE releases ADP from DnaK; ATP binding to DnaK triggers the release of the substrate protein, thus completing the reaction cycle. Several rounds of ATP-dependent interactions between DnaJ, DnaK and GrpE are required for fully efficient folding. The protein is Protein GrpE of Sulfurovum sp. (strain NBC37-1).